A 204-amino-acid polypeptide reads, in one-letter code: Tat proofreading chaperone DmsD (204 aa).

This sequence belongs to the TorD/DmsD family. DmsD subfamily.

Required for biogenesis/assembly of DMSO reductase, but not for the interaction of the DmsA signal peptide with the Tat system. May be part of a chaperone cascade complex that facilitates a folding-maturation pathway for the substrate protein. The protein is Tat proofreading chaperone DmsD of Salmonella typhi.